A 220-amino-acid polypeptide reads, in one-letter code: RNA polymerase sigma GP28 factor (220 aa).

Sigma factors are initiation factors that promote the attachment of RNA polymerase to specific initiation sites and are then released. This sigma factor is responsible for the expression of the phage middle genes. This is RNA polymerase sigma GP28 factor (28) from Bacillus subtilis (Bacteriophage SP01).